A 392-amino-acid chain; its full sequence is Ameloblastin (392 aa).

A signal peptide spans 1–26; it reads MPALKIPLFKMKDMILILCLLKMSSA. Pro-37 carries the post-translational modification Hydroxyproline. Position 43 is a phosphoserine (Ser-43). 3 disordered regions span residues 86–109, 247–280, and 349–392; these read FPWM…PGQK, TLEF…LADP, and TTLG…FQEP. Residues 97 to 109 show a composition bias toward low complexity; it reads QQPSLQPQQPGQK. Residues 359 to 381 show a composition bias toward polar residues; sequence VDSTATPDTQHTLMPRNKAQQPQ. Residues 382–392 are compositionally biased toward basic and acidic residues; that stretch reads IKHDAWHFQEP.

Belongs to the ameloblastin family.

It is found in the secreted. The protein localises to the extracellular space. Its subcellular location is the extracellular matrix. In terms of biological role, involved in the mineralization and structural organization of enamel. The protein is Ameloblastin (AMBN) of Bos taurus (Bovine).